The primary structure comprises 196 residues: Protein TEX261 (196 aa).

The next 5 membrane-spanning stretches (helical) occupy residues F3–V23, S42–F62, I70–I90, F97–E117, and V125–S145.

It belongs to the SVP26 family.

It is found in the membrane. The chain is Protein TEX261 (TEX261) from Homo sapiens (Human).